Consider the following 302-residue polypeptide: Ornithine carbamoyltransferase (302 aa).

Residues 52–55, glutamine 79, arginine 103, and 130–133 each bind carbamoyl phosphate; these read STRT and HPCQ. L-ornithine is bound by residues asparagine 161, aspartate 221, and 225–226; that span reads SM. Residues 261–262 and arginine 289 each bind carbamoyl phosphate; that span reads CL.

Belongs to the aspartate/ornithine carbamoyltransferase superfamily. OTCase family.

It localises to the cytoplasm. The catalysed reaction is carbamoyl phosphate + L-ornithine = L-citrulline + phosphate + H(+). It participates in amino-acid biosynthesis; L-arginine biosynthesis; L-arginine from L-ornithine and carbamoyl phosphate: step 1/3. Functionally, reversibly catalyzes the transfer of the carbamoyl group from carbamoyl phosphate (CP) to the N(epsilon) atom of ornithine (ORN) to produce L-citrulline. The chain is Ornithine carbamoyltransferase from Syntrophotalea carbinolica (strain DSM 2380 / NBRC 103641 / GraBd1) (Pelobacter carbinolicus).